A 391-amino-acid polypeptide reads, in one-letter code: Phosphoglycerate kinase (391 aa).

Substrate-binding positions include 21–23 (DLN), Arg36, 59–62 (HLGR), Arg113, and Arg146. Residues Lys197, Glu319, and 345 to 348 (GGDT) each bind ATP.

This sequence belongs to the phosphoglycerate kinase family. In terms of assembly, monomer.

The protein localises to the cytoplasm. It catalyses the reaction (2R)-3-phosphoglycerate + ATP = (2R)-3-phospho-glyceroyl phosphate + ADP. The protein operates within carbohydrate degradation; glycolysis; pyruvate from D-glyceraldehyde 3-phosphate: step 2/5. The sequence is that of Phosphoglycerate kinase from Shewanella baltica (strain OS185).